We begin with the raw amino-acid sequence, 810 residues long: RING finger protein unkempt homolog (810 aa).

The segment at Met1–Leu24 is disordered. Residues Ser10 to Ala19 show a composition bias toward low complexity. 5 consecutive C3H1-type zinc fingers follow at residues Tyr84–Thr113, Tyr124–His154, Asn215–Lys241, Lys251–Thr285, and Ile293–Gln321. The segment at Asn239–Glu265 is disordered. Ser240 carries the post-translational modification Phosphoserine. Residues Lys241–Arg253 are compositionally biased toward basic residues. Residues Leu324 to Val343 form a disordered region. The segment covering Leu328 to Thr338 has biased composition (polar residues). Phosphoserine is present on residues Ser374, Ser378, Ser385, and Ser631. Residues Gly643 to Gly723 adopt a coiled-coil conformation. The RING-type; degenerate zinc-finger motif lies at Ser766 to Gln801.

This sequence belongs to the unkempt family.

The protein localises to the cytoplasm. Functionally, sequence-specific RNA-binding protein which plays an important role in the establishment and maintenance of the early morphology of cortical neurons during embryonic development. Acts as a translation repressor and controls a translationally regulated cell morphology program to ensure proper structuring of the nervous system. Translational control depends on recognition of its binding element within target mRNAs which consists of a mandatory UAG trimer upstream of a U/A-rich motif. Associated with polysomes. The sequence is that of RING finger protein unkempt homolog (UNK) from Homo sapiens (Human).